The primary structure comprises 176 residues: Prion-like protein doppel (176 aa).

Positions 1–25 are cleaved as a signal peptide; it reads MRKHLSWWWLATVCMLLFSHLSAVQ. Residues 27–50 are flexible tail; it reads RGIKHRIKWNRKALPSTAQITEAQ. T43 carries O-linked (GalNAc...) threonine glycosylation. Residues 51 to 152 are globular; it reads VAENRPGAFI…KHCEFWLERG (102 aa). 2 disulfide bridges follow: C94–C145 and C108–C140. N-linked (GlcNAc...) asparagine glycosylation is found at N98 and N110. A cu(2+) binding region spans residues 122-139; that stretch reads KPDNKLHQQVLWRLVQEL. A lipid anchor (GPI-anchor amidated glycine) is attached at G152. The propeptide at 153–176 is removed in mature form; sequence AGLRVTMHQPVLLCLLALIWLTVK.

It belongs to the prion family. In terms of processing, N-glycosylated. N-glycosylated at two distinct sites. O-glycosylated. Expressed in testis, in Sertoli cells, ejaculated spermatozoa and in seminal fluid (at protein level).

The protein resides in the cell membrane. Required for normal acrosome reaction and for normal male fertility. Can bind Cu(2+). The sequence is that of Prion-like protein doppel (PRND) from Homo sapiens (Human).